Consider the following 224-residue polypeptide: Glutathione S-transferase D7 (224 aa).

Residues 2–83 (PNLDLYNFPM…YLVEKYGKPD (82 aa)) enclose the GST N-terminal domain. Residues 53-55 (HTI) and 67-69 (ESR) each bind glutathione. In terms of domain architecture, GST C-terminal spans 90-210 (DPQKRALINQ…LESLQQGKKF (121 aa)).

Belongs to the GST superfamily. Delta family. In terms of assembly, homodimer.

It carries out the reaction RX + glutathione = an S-substituted glutathione + a halide anion + H(+). In terms of biological role, conjugation of reduced glutathione to a wide number of exogenous and endogenous hydrophobic electrophiles. May be involved in detoxification. The polypeptide is Glutathione S-transferase D7 (Drosophila melanogaster (Fruit fly)).